The sequence spans 423 residues: UDP-N-acetylglucosamine 1-carboxyvinyltransferase 1 (423 aa).

Phosphoenolpyruvate is bound at residue 24 to 25; sequence KN. A UDP-N-acetyl-alpha-D-glucosamine-binding site is contributed by R94. The active-site Proton donor is the C118. Position 118 is a 2-(S-cysteinyl)pyruvic acid O-phosphothioketal (C118). UDP-N-acetyl-alpha-D-glucosamine is bound by residues 123 to 127, D309, and I331; that span reads RPIDQ.

The protein belongs to the EPSP synthase family. MurA subfamily.

The protein resides in the cytoplasm. It catalyses the reaction phosphoenolpyruvate + UDP-N-acetyl-alpha-D-glucosamine = UDP-N-acetyl-3-O-(1-carboxyvinyl)-alpha-D-glucosamine + phosphate. The protein operates within cell wall biogenesis; peptidoglycan biosynthesis. Cell wall formation. Adds enolpyruvyl to UDP-N-acetylglucosamine. The polypeptide is UDP-N-acetylglucosamine 1-carboxyvinyltransferase 1 (Staphylococcus haemolyticus (strain JCSC1435)).